Consider the following 148-residue polypeptide: Large ribosomal subunit protein uL15 (148 aa).

Residues 1–30 are compositionally biased toward basic residues; sequence MTHSKRNTRKLRGHVSHGHGRVGKHRKHPG. Positions 1 to 38 are disordered; it reads MTHSKRNTRKLRGHVSHGHGRVGKHRKHPGGRGMAGPE.

The protein belongs to the universal ribosomal protein uL15 family.

The sequence is that of Large ribosomal subunit protein uL15 (RPL27A) from Euplotes crassus.